Here is an 88-residue protein sequence, read N- to C-terminus: UPF0250 protein bbp_432 (88 aa).

Belongs to the UPF0250 family.

This chain is UPF0250 protein bbp_432, found in Buchnera aphidicola subsp. Baizongia pistaciae (strain Bp).